A 411-amino-acid chain; its full sequence is Z-DNA-binding protein 1 (411 aa).

2 consecutive Z-binding domains span residues 8-70 and 84-148; these read LSTG…SIGG and SSAQ…HSRQ. Glycyl lysine isopeptide (Lys-Gly) (interchain with G-Cter in ubiquitin) cross-links involve residues K17 and K43. Residues 60 to 86 form a disordered region; sequence SPEPATWSIGGAASGDGAPAIPENSSA. 2 consecutive short sequence motifs (RIP homotypic interaction motif (RHIM)) follow at residues 188 to 205 and 237 to 261; these read NSNAIQIGHGNVIVREKA and YIYMDKSLLQQVQLGHHNEMSLVGD. Disordered stretches follow at residues 263 to 303 and 332 to 411; these read GKHP…EGDT and KGEV…LSKQ. Polar residues-rich tracts occupy residues 268 to 292, 350 to 371, and 400 to 411; these read YSFSDSPPEVSTTTADPGASFNMQT, GTSSEATPPRSCQHTPSDSMLP, and IESSQDTGLSKQ.

In terms of assembly, homodimer. Interacts (via RIP homotypic interaction motif) with RIPK3; leading to RIPK3 activation and necroptosis; interaction is enhanced by CASP6. Interacts (via RIP homotypic interaction motif) with RIPK1. Component of the AIM2 PANoptosome complex, a multiprotein complex that drives inflammatory cell death (PANoptosis). (Microbial infection) Interacts (via RIP homotypic interaction motif) with murid herpesvirus protein RIR1 (via RIP homotypic interaction motif); leading to inhibition of ZBP1-dependent necroptosis. As to quaternary structure, (Microbial infection) Interacts with vaccinia virus E3 protein; leading to inhibit ZBP1-dependent necroptosis. Ubiquitinated; polyubiquitinated following influenza A virus (IAV) infection. In terms of processing, phosphorylated. As to expression, expressed in lung, spleen and liver. Lower levels were seen in heart, kidney and testis. Expression is greatly up-regulated in tumor stromal cells and activated macrophages.

It is found in the cytoplasm. The protein resides in the nucleus. Its activity is regulated as follows. ZBP1-dependent necroptosis is normally inhibited by RIPK1: RIPK1 inhibits the ZBP1-induced activation of RIPK3 via FADD-mediated recruitment of CASP8, which cleaves RIPK1 and limits TNF-induced necroptosis. Key innate sensor that recognizes and binds Z-RNA structures, which are produced by a number of viruses, such as herpesvirus, orthomyxovirus or flavivirus, and triggers different forms of cell death. ZBP1 acts as an essential mediator of pyroptosis, necroptosis and apoptosis (PANoptosis), an integral part of host defense against pathogens, by activating RIPK3, caspase-8 (CASP8), and the NLRP3 inflammasome. Key activator of necroptosis, a programmed cell death process in response to death-inducing TNF-alpha family members, via its ability to bind Z-RNA: once activated upon Z-RNA-binding, ZBP1 interacts and stimulates RIPK3 kinase, which phosphorylates and activates MLKL, triggering execution of programmed necrosis. In addition to TNF-induced necroptosis, necroptosis can also take place in the nucleus in response to orthomyxoviruses infection: ZBP1 recognizes and binds Z-RNA structures that are produced in infected nuclei by orthomyxoviruses, such as the influenza A virus (IAV), leading to ZBP1 activation, RIPK3 stimulation and subsequent MLKL phosphorylation, triggering disruption of the nuclear envelope and leakage of cellular DNA into the cytosol. ZBP1-dependent cell death in response to IAV infection promotes interleukin-1 alpha (IL1A) induction in an NLRP3-inflammasome-independent manner: IL1A expression is required for the optimal interleukin-1 beta (IL1B) production, and together, these cytokines promote infiltration of inflammatory neutrophils to the lung, leading to the formation of neutrophil extracellular traps. In addition to its direct role in driving necroptosis via its ability to sense Z-RNAs, also involved in PANoptosis triggered in response to bacterial infection: component of the AIM2 PANoptosome complex, a multiprotein complex that triggers PANoptosis. Also acts as the apical sensor of fungal infection responsible for activating PANoptosis. Involved in CASP8-mediated cell death via its interaction with RIPK1 but independently of its ability to sense Z-RNAs. In some cell types, also able to restrict viral replication by promoting cell death-independent responses. In response to flavivirus infection in neurons, promotes a cell death-independent pathway that restricts viral replication: together with RIPK3, promotes a death-independent transcriptional program that modifies the cellular metabolism via up-regulation expression of the enzyme ACOD1/IRG1 and production of the metabolite itaconate. Itaconate inhibits the activity of succinate dehydrogenase, generating a metabolic state in neurons that suppresses replication of viral genomes. This is Z-DNA-binding protein 1 from Mus musculus (Mouse).